The sequence spans 720 residues: Receptor-like protein CLAVATA2 (720 aa).

A signal peptide spans 1–25; that stretch reads MIKIADFTLFFFIFVFSPSLPLAQS. Residues 26–92 are N-cap; the sequence is QLPDLDPQDK…LNLSSQIHPS (67 aa). At 26–686 the chain is on the extracellular side; the sequence is QLPDLDPQDK…QNELVEGPIS (661 aa). Asn-49, Asn-62, Asn-84, Asn-108, Asn-127, and Asn-168 each carry an N-linked (GlcNAc...) asparagine glycan. Cys-60 and Cys-68 are joined by a disulfide. 21 LRR repeats span residues 96–122, 124–144, 146–168, 170–194, 195–217, 219–238, 239–263, 264–287, 288–311, 314–338, 339–362, 364–386, 388–410, 411–436, 438–458, 459–482, 484–506, 547–571, 573–594, 595–617, and 619–641; these read LSSL…SLRN, RTLN…FVSL, ELRE…WFGN, SMNL…LLYL, KSLK…FQQP, VVLN…FYAS, RPSL…LGSL, KELS…LMFS, EKLV…ISET, KLGL…ITEL, KSLQ…IGNL, YLQV…IVGC, QLLA…LDAL, DSLK…GLKS, EIVD…ITKW, SNLK…LFKF, KIQM…NLNS, LLSM…LFRQ, NIEY…LEKL, PRLK…NISA, and PGLT…KEGL. Asn-206 carries an N-linked (GlcNAc...) asparagine glycan. An N-linked (GlcNAc...) asparagine glycan is attached at Asn-270. N-linked (GlcNAc...) asparagine glycosylation is present at Asn-361. Asn-398 carries N-linked (GlcNAc...) asparagine glycosylation. Asn-446 is a glycosylation site (N-linked (GlcNAc...) asparagine). N-linked (GlcNAc...) asparagine glycosylation occurs at Asn-505. N-linked (GlcNAc...) asparagine glycans are attached at residues Asn-578, Asn-614, and Asn-625. Residues 649-682 are C-cap/acidic domain; that stretch reads AGNPELCVETPGSKCDPANIDASQEEIYQNELVE. Residues 687 to 707 traverse the membrane as a helical segment; sequence IWIFCLSAFISFDFGVLGIFC. Residues 708–720 are Cytoplasmic-facing; the sequence is SARARSYILQTKA.

Belongs to the RLP family. In terms of assembly, parts of a tetrameric complex made of two CLV2/CRN heterodimers that can interact with CLV3 and CLE peptides. CLV2/CRN heterodimer interacts with CLV1 homodimers. Interacts with CRN; this dimer can interact with BAM3. Interacts with CLE14. Mostly expressed in apices (e.g. shoot apical meristem and flower buds), and, to a lower extent, in flowers, leaves, seedlings and siliques. Also expressed in the inner tissues of the proximal root meristem. Expressed throughout the vascular cylinder of root tips.

It is found in the cell membrane. The protein localises to the endoplasmic reticulum membrane. Functionally, involved in the perception of CLV3 and CLV3-like (CLE) peptides, that act as extracellular signals regulating meristems maintenance. Required for the sensing of the root CLE peptides (e.g. CLE8, CLE9/CLE10, CLE11, CLE13, CLE14, CLE16, CLE17, CLE18, CLE20, CLE21, CLE25, CLE26, CLE40, CLE41/CLE44 and CLE45), which also involves CRN and leads to root growth regulation, mostly in the phloem and protophloem. Involved in controlling the stem cell population size in shoot and root apical meristems, and during organ development. Promotes the formation of CLV1 multimers. In complex with CRN, perceives secreted CLV3-like effector proteins from plant-parasitic cyst nematodes as ligand mimics of the plant CLE signaling pathway. This recognition is required for proper feeding structure (syncytium) development and ultimately successful nematode infection. CLE14 perception by CLV2/CRN complex triggers root meristem differentiation. The sequence is that of Receptor-like protein CLAVATA2 from Arabidopsis thaliana (Mouse-ear cress).